The primary structure comprises 202 residues: Na(+)-translocating NADH-quinone reductase subunit E (202 aa).

The next 6 membrane-spanning stretches (helical) occupy residues Ser11–Ile31, Val35–Ala55, Phe81–Leu101, Gly114–Val134, Val144–Ile164, and Leu180–Ile200.

It belongs to the NqrDE/RnfAE family. In terms of assembly, composed of six subunits; NqrA, NqrB, NqrC, NqrD, NqrE and NqrF.

It localises to the cell inner membrane. It catalyses the reaction a ubiquinone + n Na(+)(in) + NADH + H(+) = a ubiquinol + n Na(+)(out) + NAD(+). NQR complex catalyzes the reduction of ubiquinone-1 to ubiquinol by two successive reactions, coupled with the transport of Na(+) ions from the cytoplasm to the periplasm. NqrA to NqrE are probably involved in the second step, the conversion of ubisemiquinone to ubiquinol. The polypeptide is Na(+)-translocating NADH-quinone reductase subunit E (Azotobacter vinelandii (strain DJ / ATCC BAA-1303)).